The sequence spans 316 residues: Olfactory receptor 2AG2 (316 aa).

Topologically, residues 1–30 (MELRNSTLGSGFILVGILNDSGSPELLYAT) are extracellular. N5 and N19 each carry an N-linked (GlcNAc...) asparagine glycan. Residues 31–51 (FTILYMLALTSNGLLLLAITI) form a helical membrane-spanning segment. Residues 52-56 (EARLH) lie on the Cytoplasmic side of the membrane. Residues 57–77 (MPMYLLLGQLSLMDLLFTSVV) form a helical membrane-spanning segment. The Extracellular portion of the chain corresponds to 78–97 (TPKALADFLRRENTISFGGC). Cysteines 97 and 179 form a disulfide. The chain crosses the membrane as a helical span at residues 98 to 118 (ALQMFLALTMGSAEDLLLAFM). Topologically, residues 119 to 139 (AYDRYVAICHPLKYMTLMSPR) are cytoplasmic. The chain crosses the membrane as a helical span at residues 140–160 (VCWIMVATSWILASLIAIGHT). Over 161 to 205 (MYTMHLPFCVSWEIRHLLCEIPPLLKLACADTSRYELIIYVTGVT) the chain is Extracellular. The helical transmembrane segment at 206–226 (FLLLPISAIVASYTLVLFTVL) threads the bilayer. Residues 227-244 (RMPSNEGRKKALVTCSSH) are Cytoplasmic-facing. Residues 245 to 265 (LIVVGMFYGAATFMYVLPSSF) form a helical membrane-spanning segment. The Extracellular segment spans residues 266–271 (HSPKQD). The helical transmembrane segment at 272–292 (NIISVFYTIVTPALNPLIYSL) threads the bilayer. Residues 293–316 (RNKEVMRALRRVLGKYILLAHSTL) are Cytoplasmic-facing.

It belongs to the G-protein coupled receptor 1 family.

The protein resides in the cell membrane. In terms of biological role, odorant receptor. The protein is Olfactory receptor 2AG2 (OR2AG2) of Homo sapiens (Human).